The chain runs to 103 residues: Large ribosomal subunit protein bL21 (103 aa).

The protein belongs to the bacterial ribosomal protein bL21 family. In terms of assembly, part of the 50S ribosomal subunit. Contacts protein L20.

Its function is as follows. This protein binds to 23S rRNA in the presence of protein L20. The sequence is that of Large ribosomal subunit protein bL21 from Chromobacterium violaceum (strain ATCC 12472 / DSM 30191 / JCM 1249 / CCUG 213 / NBRC 12614 / NCIMB 9131 / NCTC 9757 / MK).